The chain runs to 1166 residues: Serine-aspartate repeat-containing protein E (1166 aa).

A signal peptide spans 1 to 52; it reads MINRDNKKAITKKGMISNRLNKFSIRKYTVGTASILVGTTLIFGLGNQEAKA. The YSIRK-G/S signaling motif motif lies at 23–34; it reads FSIRKYTVGTAS. The segment at 53-606 is ligand binding A region; that stretch reads AENTSTENAK…GDGTVKPEEK (554 aa). Positions 54–230 are disordered; it reads ENTSTENAKQ…SKEELKNNPE (177 aa). Residues 61–75 are compositionally biased toward basic and acidic residues; it reads AKQDDATTSDNKEVV. The span at 77 to 90 shows a compositional bias: low complexity; sequence ETENNSTTENNSTN. Residues 92-108 are compositionally biased toward basic and acidic residues; sequence IKKETNTDSQPEAKKES. Residues 118–129 are compositionally biased toward polar residues; the sequence is NNVTATTETKPQ. Over residues 130-145 the composition is skewed to basic and acidic residues; it reads NIEKENVKPSTDKTAT. Residues 166–178 show a composition bias toward low complexity; sequence TTKPSTSEPSTSE. Residues 179 to 212 show a composition bias toward polar residues; it reads IQTKPTTPQESTNIENSQPQPTPSKVDNQVTDAT. Residues 221-230 are compositionally biased toward basic and acidic residues; the sequence is SKEELKNNPE. CNA-B domains follow at residues 607–719, 720–829, and 830–940; these read LYKI…YKEP, KYNL…YKTP, and KYSL…EEDT. Residues 904-1141 form a disordered region; sequence VTNTTEDDKD…TGSENNGSNN (238 aa). 2 stretches are compositionally biased toward acidic residues: residues 908–918 and 935–1105; these read TEDDKDADGGE and YFEE…DSDS. An LPXTG sorting signal motif is present at residues 1129–1133; the sequence is LPETG. Pentaglycyl murein peptidoglycan amidated threonine is present on Thr-1132. Residues 1133–1166 constitute a propeptide, removed by sortase; the sequence is GSENNGSNNATLFGGLFAALGSLLLFGRRKKQNK.

It belongs to the serine-aspartate repeat-containing protein (SDr) family. In terms of assembly, interacts with host complement factor H/CFAH (via C-terminus). Interacts with host complement regulator C4BPA.

The protein resides in the secreted. Its subcellular location is the cell wall. In terms of biological role, cell surface-associated calcium-binding protein which plays an important role in adhesion and pathogenesis. Contributes to the resistance to killing by innate immune components in blood and thus attenuates bacterial clearance by interacting with host complement factor H/CFAH and modulating its activity. Inhibits also bacterial opsonization and killing by interacting with host complement regulator C4BPA and thus inhibiting classical complement pathway activation. This chain is Serine-aspartate repeat-containing protein E (sdrE), found in Staphylococcus aureus (strain Newman).